Reading from the N-terminus, the 403-residue chain is Phosphoglycerate kinase (403 aa).

Substrate-binding positions include 21 to 23, Arg36, 59 to 62, Arg119, and Arg159; these read DFN and HLGR. ATP contacts are provided by residues Lys214, Gly301, Glu332, and 359-362; that span reads GGDS.

This sequence belongs to the phosphoglycerate kinase family. As to quaternary structure, monomer.

It localises to the cytoplasm. The enzyme catalyses (2R)-3-phosphoglycerate + ATP = (2R)-3-phospho-glyceroyl phosphate + ADP. It functions in the pathway carbohydrate degradation; glycolysis; pyruvate from D-glyceraldehyde 3-phosphate: step 2/5. This is Phosphoglycerate kinase from Lactobacillus delbrueckii subsp. bulgaricus (strain ATCC 11842 / DSM 20081 / BCRC 10696 / JCM 1002 / NBRC 13953 / NCIMB 11778 / NCTC 12712 / WDCM 00102 / Lb 14).